The primary structure comprises 178 residues: ATP-dependent protease subunit HslV (178 aa).

Residue T7 is part of the active site. Na(+) is bound by residues G162, C165, and T168.

The protein belongs to the peptidase T1B family. HslV subfamily. A double ring-shaped homohexamer of HslV is capped on each side by a ring-shaped HslU homohexamer. The assembly of the HslU/HslV complex is dependent on binding of ATP.

Its subcellular location is the cytoplasm. It catalyses the reaction ATP-dependent cleavage of peptide bonds with broad specificity.. With respect to regulation, allosterically activated by HslU binding. Protease subunit of a proteasome-like degradation complex believed to be a general protein degrading machinery. The polypeptide is ATP-dependent protease subunit HslV (Burkholderia multivorans (strain ATCC 17616 / 249)).